We begin with the raw amino-acid sequence, 113 residues long: Insulin (113 aa).

Positions 1–24 are cleaved as a signal peptide; the sequence is MAALWLQAFSLLVLMMVSWPGSQA. 3 cysteine pairs are disulfide-bonded: cysteine 32-cysteine 99, cysteine 44-cysteine 112, and cysteine 98-cysteine 103. A propeptide spans 56–90 (c peptide); sequence DVDPLLGFLPPKAGGAVVQGGENEVTFKDQMEMMV.

Belongs to the insulin family. As to quaternary structure, heterodimer of a B chain and an A chain linked by two disulfide bonds.

The protein resides in the secreted. Functionally, insulin decreases blood glucose concentration. It increases cell permeability to monosaccharides, amino acids and fatty acids. It accelerates glycolysis, the pentose phosphate cycle, and glycogen synthesis in liver. In Oreochromis niloticus (Nile tilapia), this protein is Insulin (ins).